The chain runs to 921 residues: Probable dipeptidyl-aminopeptidase B (921 aa).

Disordered stretches follow at residues 1–33 (MAGH…TAST) and 45–66 (VAAN…RGER). Residues 1–109 (MAGHPEENAQ…NKSVDKKLRR (109 aa)) lie on the Cytoplasmic side of the membrane. The segment covering 10 to 22 (QLLSTEQESMSRN) has biased composition (polar residues). Residues 23-33 (SSDSVASTAST) show a composition bias toward low complexity. A helical; Signal-anchor for type II membrane protein membrane pass occupies residues 110–130 (LIWIIGGVFIGAWVLALFIFL). Residues 131–921 (GKQAYKHSSE…VPLEIDAAKV (791 aa)) are Vacuolar-facing. The interval 138 to 157 (SSESPHDPQATSSRGSGKKV) is disordered. Asn-362 is a glycosylation site (N-linked (GlcNAc...) asparagine). The active-site Charge relay system is Ser-768. Asn-822 carries N-linked (GlcNAc...) asparagine glycosylation. Active-site charge relay system residues include Asp-845 and His-878.

This sequence belongs to the peptidase S9B family.

It localises to the vacuole membrane. The catalysed reaction is Release of an N-terminal dipeptide, Xaa-Yaa-|-Zaa-, from a polypeptide, preferentially when Yaa is Pro, provided Zaa is neither Pro nor hydroxyproline.. Type IV dipeptidyl-peptidase which removes N-terminal dipeptides sequentially from polypeptides having unsubstituted N-termini provided that the penultimate residue is proline. The protein is Probable dipeptidyl-aminopeptidase B (dapB) of Botryotinia fuckeliana (strain B05.10) (Noble rot fungus).